The following is a 629-amino-acid chain: LEAF RUST 10 DISEASE-RESISTANCE LOCUS RECEPTOR-LIKE PROTEIN KINASE-like 1.1 (629 aa).

The first 19 residues, 1 to 19, serve as a signal peptide directing secretion; it reads METVSVLLFFFLFLLAAEA. Topologically, residues 20 to 225 are extracellular; that stretch reads RSTKRTGCKD…PNNYHAEMRL (206 aa). N-linked (GlcNAc...) asparagine glycans are attached at residues Asn-56, Asn-92, Asn-123, Asn-124, Asn-172, and Asn-177. A helical membrane pass occupies residues 226–246; sequence GLGIGGSVILIIILVALFAVI. The Cytoplasmic segment spans residues 247–629; sequence HRNYRRKDGS…TTPNTSAYEF (383 aa). The Protein kinase domain maps to 291–565; the sequence is FSKDRLLGDG…TMEQVVHELK (275 aa). ATP is bound by residues 297–305 and Lys-319; that span reads LGDGGFGTV. Tyr-365 bears the Phosphotyrosine mark. Asp-416 acts as the Proton acceptor in catalysis. A Phosphoserine modification is found at Ser-449. Residues Thr-450 and Thr-455 each carry the phosphothreonine modification. Position 463 is a phosphotyrosine (Tyr-463). The disordered stretch occupies residues 609–629; the sequence is VSVTDQWTSKSTTPNTSAYEF.

It belongs to the protein kinase superfamily. Ser/Thr protein kinase family.

It is found in the cell membrane. It catalyses the reaction L-seryl-[protein] + ATP = O-phospho-L-seryl-[protein] + ADP + H(+). It carries out the reaction L-threonyl-[protein] + ATP = O-phospho-L-threonyl-[protein] + ADP + H(+). The chain is LEAF RUST 10 DISEASE-RESISTANCE LOCUS RECEPTOR-LIKE PROTEIN KINASE-like 1.1 from Arabidopsis thaliana (Mouse-ear cress).